The following is a 216-amino-acid chain: Imidazole glycerol phosphate synthase subunit HisH (216 aa).

A Glutamine amidotransferase type-1 domain is found at 2–216 (RVAIIDYGSG…LITNFLRWRP (215 aa)). Catalysis depends on Cys-88, which acts as the Nucleophile. Residues His-196 and Glu-198 contribute to the active site.

Heterodimer of HisH and HisF.

It localises to the cytoplasm. It catalyses the reaction 5-[(5-phospho-1-deoxy-D-ribulos-1-ylimino)methylamino]-1-(5-phospho-beta-D-ribosyl)imidazole-4-carboxamide + L-glutamine = D-erythro-1-(imidazol-4-yl)glycerol 3-phosphate + 5-amino-1-(5-phospho-beta-D-ribosyl)imidazole-4-carboxamide + L-glutamate + H(+). The enzyme catalyses L-glutamine + H2O = L-glutamate + NH4(+). It participates in amino-acid biosynthesis; L-histidine biosynthesis; L-histidine from 5-phospho-alpha-D-ribose 1-diphosphate: step 5/9. In terms of biological role, IGPS catalyzes the conversion of PRFAR and glutamine to IGP, AICAR and glutamate. The HisH subunit catalyzes the hydrolysis of glutamine to glutamate and ammonia as part of the synthesis of IGP and AICAR. The resulting ammonia molecule is channeled to the active site of HisF. This is Imidazole glycerol phosphate synthase subunit HisH from Mesorhizobium japonicum (strain LMG 29417 / CECT 9101 / MAFF 303099) (Mesorhizobium loti (strain MAFF 303099)).